The following is a 471-amino-acid chain: Glutamate--tRNA ligase 1 (471 aa).

The short motif at 10–20 (PSPTGFLHIGG) is the 'HIGH' region element. The interval 113-140 (ARKEGRPPRYDGRWRDRDPSEAPKDRDP) is disordered. A 'KMSKS' region motif is present at residues 239-243 (KLSKR). Residue K242 coordinates ATP.

The protein belongs to the class-I aminoacyl-tRNA synthetase family. Glutamate--tRNA ligase type 1 subfamily. In terms of assembly, monomer.

The protein resides in the cytoplasm. It carries out the reaction tRNA(Glu) + L-glutamate + ATP = L-glutamyl-tRNA(Glu) + AMP + diphosphate. Its function is as follows. Catalyzes the attachment of glutamate to tRNA(Glu) in a two-step reaction: glutamate is first activated by ATP to form Glu-AMP and then transferred to the acceptor end of tRNA(Glu). The sequence is that of Glutamate--tRNA ligase 1 from Xanthobacter autotrophicus (strain ATCC BAA-1158 / Py2).